We begin with the raw amino-acid sequence, 359 residues long: MSTENTLSVADLARENVRNLVPYQSARRLGGNGDVWLNANEFPTAVEFQLTQQTLNRYPECQPKAVIENYAQYAGVKPEQVLVSRGADEGIELVIRAFCEPGKDAILYCPPTYGMYSVSAETIGVERRTVPALENWQLDLQGISDNLDGTKVVFVCSPNNPTGQLINPQDLRTLLELTRGKAIVVADEAYIEFCPQATLTGWLVEYPHLVILRTLSKAFALAGLRCGFTLANEEVINLLLKVIAPYPLSTPVADIAAQALCPQGINAMRDRVAQTVQERQYLVNALQQTACVEHVFDSETNYILARFTASSSVFKSLWDQGIILRDQNKQPSLSGCLRITVGTRQENQRVIDALRAEPV.

Lysine 217 carries the post-translational modification N6-(pyridoxal phosphate)lysine.

This sequence belongs to the class-II pyridoxal-phosphate-dependent aminotransferase family. Histidinol-phosphate aminotransferase subfamily. In terms of assembly, homodimer. The cofactor is pyridoxal 5'-phosphate.

It carries out the reaction L-histidinol phosphate + 2-oxoglutarate = 3-(imidazol-4-yl)-2-oxopropyl phosphate + L-glutamate. Its pathway is amino-acid biosynthesis; L-histidine biosynthesis; L-histidine from 5-phospho-alpha-D-ribose 1-diphosphate: step 7/9. The chain is Histidinol-phosphate aminotransferase (hisC) from Salmonella typhimurium (strain LT2 / SGSC1412 / ATCC 700720).